We begin with the raw amino-acid sequence, 357 residues long: MTIGREKMKVEEILENARKAFKLTTKHFGNTVTFERALFLGWYCNLKQPCKFCYMATQKNKIKDPRKARRRLESVLAEAILMKRIGWKLEFISGGYGYTPKEINDIAEMVAYVQKCRQYLNVGVIDLDNINLDVIEGVVGAVETVSKDRDWICPGKPLDKIKDNLLKAKELGLKTGITIILGLGEKEEDIEKLLNLIEELDLNRITFYSLNPQKGTIYENKPSVTTIEYMNWVSSVRLNFPKIKIITGVWVDKIPMISPLIMSGSNVITKFPLFSVFGTKEAHWIEKEILATGRELLGTFTDIDILAGKKVLEKTPYIEEEINISSENIKRVEELRENINERIESYVSKVLRKIKAS.

The Radical SAM core domain maps to 27 to 242 (HFGNTVTFER…VSSVRLNFPK (216 aa)). Residues Cys44, Cys50, and Cys53 each contribute to the [4Fe-4S] cluster site.

[4Fe-4S] cluster serves as cofactor.

This is an uncharacterized protein from Methanocaldococcus jannaschii (strain ATCC 43067 / DSM 2661 / JAL-1 / JCM 10045 / NBRC 100440) (Methanococcus jannaschii).